The following is a 195-amino-acid chain: Imidazoleglycerol-phosphate dehydratase (195 aa).

Belongs to the imidazoleglycerol-phosphate dehydratase family.

The protein resides in the cytoplasm. It catalyses the reaction D-erythro-1-(imidazol-4-yl)glycerol 3-phosphate = 3-(imidazol-4-yl)-2-oxopropyl phosphate + H2O. The protein operates within amino-acid biosynthesis; L-histidine biosynthesis; L-histidine from 5-phospho-alpha-D-ribose 1-diphosphate: step 6/9. In Thiobacillus denitrificans (strain ATCC 25259 / T1), this protein is Imidazoleglycerol-phosphate dehydratase.